A 373-amino-acid chain; its full sequence is Cytoplasmic tRNA 2-thiolation protein 1 (373 aa).

This sequence belongs to the TtcA family. CTU1/NCS6/ATPBD3 subfamily.

The protein resides in the cytoplasm. It participates in tRNA modification; 5-methoxycarbonylmethyl-2-thiouridine-tRNA biosynthesis. Plays a central role in 2-thiolation of mcm(5)S(2)U at tRNA wobble positions of tRNA(Lys), tRNA(Glu) and tRNA(Gln). Directly binds tRNAs and probably acts by catalyzing adenylation of tRNAs, an intermediate required for 2-thiolation. It is unclear whether it acts as a sulfurtransferase that transfers sulfur from thiocarboxylated URM1 onto the uridine of tRNAs at wobble position. The protein is Cytoplasmic tRNA 2-thiolation protein 1 of Caenorhabditis elegans.